The primary structure comprises 21 residues: Granulitoxin (21 aa).

Residues 1 to 21 (AKTGILDSDGPTVAGNSLSGT) are disordered.

It is found in the secreted. The protein localises to the nematocyst. Injection into mice produces severe neurotoxic effects such as circular movements, aggressive behavior, dyspnea, tonic-clonic convulsion and death. In Bunodosoma cangicum (Sea anemone), this protein is Granulitoxin.